A 152-amino-acid polypeptide reads, in one-letter code: Endoribonuclease YbeY (152 aa).

Zn(2+) contacts are provided by histidine 117, histidine 121, and histidine 127.

It belongs to the endoribonuclease YbeY family. Requires Zn(2+) as cofactor.

Its subcellular location is the cytoplasm. Functionally, single strand-specific metallo-endoribonuclease involved in late-stage 70S ribosome quality control and in maturation of the 3' terminus of the 16S rRNA. In Sulfurihydrogenibium sp. (strain YO3AOP1), this protein is Endoribonuclease YbeY.